A 341-amino-acid polypeptide reads, in one-letter code: Glycerol-3-phosphate dehydrogenase [NAD(P)+] 1 (341 aa).

Positions 17, 18, 37, and 112 each coordinate NADPH. Residues K112 and G140 each coordinate sn-glycerol 3-phosphate. A144 contacts NADPH. 5 residues coordinate sn-glycerol 3-phosphate: K195, D248, S258, R259, and N260. K195 acts as the Proton acceptor in catalysis. R259 provides a ligand contact to NADPH. NADPH is bound by residues V283 and E285.

Belongs to the NAD-dependent glycerol-3-phosphate dehydrogenase family.

Its subcellular location is the cytoplasm. It carries out the reaction sn-glycerol 3-phosphate + NAD(+) = dihydroxyacetone phosphate + NADH + H(+). The enzyme catalyses sn-glycerol 3-phosphate + NADP(+) = dihydroxyacetone phosphate + NADPH + H(+). It participates in membrane lipid metabolism; glycerophospholipid metabolism. Functionally, catalyzes the reduction of the glycolytic intermediate dihydroxyacetone phosphate (DHAP) to sn-glycerol 3-phosphate (G3P), the key precursor for phospholipid synthesis. This Mycobacterium bovis (strain ATCC BAA-935 / AF2122/97) protein is Glycerol-3-phosphate dehydrogenase [NAD(P)+] 1.